The sequence spans 520 residues: mRNA-capping enzyme subunit beta (520 aa).

The tract at residues 1-185 is disordered; sequence MNVGSILNDD…PQPVFDDQDD (185 aa). 2 stretches are compositionally biased toward polar residues: residues 11-21 and 44-56; these read PPSSGNANGND and ITSMLNDTPSDST. Residues 92 to 108 are compositionally biased toward low complexity; that stretch reads SSSSVGSSEHSSARSSP. 2 stretches are compositionally biased toward basic and acidic residues: residues 126–135 and 149–176; these read PATKTEKKAE and KLEEHENDTNKVEKVVDSAPEPKPKKEP.

It belongs to the fungal TPase family. Heterodimer. The mRNA-capping enzyme is composed of two separate chains alpha and beta, respectively a mRNA guanylyltransferase and an mRNA 5'-triphosphate monophosphatase. Requires Mg(2+) as cofactor.

Its subcellular location is the nucleus. The catalysed reaction is a 5'-end triphospho-ribonucleoside in mRNA + H2O = a 5'-end diphospho-ribonucleoside in mRNA + phosphate + H(+). Functionally, first step of mRNA capping. Converts the 5'-triphosphate end of a nascent mRNA chain into a diphosphate end. In Candida albicans (strain SC5314 / ATCC MYA-2876) (Yeast), this protein is mRNA-capping enzyme subunit beta (CET1).